We begin with the raw amino-acid sequence, 750 residues long: Catalase A (750 aa).

The segment at E30–R49 is disordered. Residues H93 and N166 contribute to the active site. Y380 serves as a coordination point for heme.

The protein belongs to the catalase family. Heme is required as a cofactor.

It is found in the peroxisome matrix. The catalysed reaction is 2 H2O2 = O2 + 2 H2O. Functionally, catalyzes the degradation of hydrogen peroxide (H(2)O(2)) generated by peroxisomal oxidases to water and oxygen, thereby protecting cells from the toxic effects of hydrogen peroxide. This is Catalase A (catA) from Aspergillus fumigatus (strain ATCC MYA-4609 / CBS 101355 / FGSC A1100 / Af293) (Neosartorya fumigata).